Reading from the N-terminus, the 240-residue chain is Thiopurine S-methyltransferase (240 aa).

24-35 provides a ligand contact to S-adenosyl-L-methionine; sequence WQDKWVTRHIAF. Phe35 contributes to the substrate binding site. The residue at position 53 (Lys53) is an N6-acetyllysine. S-adenosyl-L-methionine is bound by residues Leu64, Glu85, 129 to 130, and Arg147; that span reads SI.

This sequence belongs to the class I-like SAM-binding methyltransferase superfamily. TPMT family. As to quaternary structure, monomer.

Its subcellular location is the cytoplasm. It catalyses the reaction S-adenosyl-L-methionine + a thiopurine = S-adenosyl-L-homocysteine + a thiopurine S-methylether.. The catalysed reaction is mercaptopurine + S-adenosyl-L-methionine = 6-methylthiopurine + S-adenosyl-L-homocysteine + H(+). Its function is as follows. Catalyzes the S-methylation of thiopurine drugs such as 6-mercaptopurine (also called mercaptopurine, 6-MP or its brand name Purinethol) using S-adenosyl-L-methionine as the methyl donor. TPMT activity modulates the cytotoxic effects of thiopurine prodrugs. A natural substrate for this enzyme has yet to be identified. This chain is Thiopurine S-methyltransferase (Tpmt), found in Rattus norvegicus (Rat).